Here is a 129-residue protein sequence, read N- to C-terminus: Large ribosomal subunit protein uL22 (129 aa).

The protein belongs to the universal ribosomal protein uL22 family. In terms of assembly, part of the 50S ribosomal subunit.

This protein binds specifically to 23S rRNA; its binding is stimulated by other ribosomal proteins, e.g. L4, L17, and L20. It is important during the early stages of 50S assembly. It makes multiple contacts with different domains of the 23S rRNA in the assembled 50S subunit and ribosome. Its function is as follows. The globular domain of the protein is located near the polypeptide exit tunnel on the outside of the subunit, while an extended beta-hairpin is found that lines the wall of the exit tunnel in the center of the 70S ribosome. The chain is Large ribosomal subunit protein uL22 from Onion yellows phytoplasma (strain OY-M).